A 227-amino-acid polypeptide reads, in one-letter code: Probable methylthioribulose-1-phosphate dehydratase (227 aa).

Cys-87 serves as a coordination point for substrate. Zn(2+) contacts are provided by His-105 and His-107. The active-site Proton donor/acceptor is Glu-129. Zn(2+) is bound at residue His-185.

Belongs to the aldolase class II family. MtnB subfamily. It depends on Zn(2+) as a cofactor.

It is found in the cytoplasm. The catalysed reaction is 5-(methylsulfanyl)-D-ribulose 1-phosphate = 5-methylsulfanyl-2,3-dioxopentyl phosphate + H2O. Its pathway is amino-acid biosynthesis; L-methionine biosynthesis via salvage pathway; L-methionine from S-methyl-5-thio-alpha-D-ribose 1-phosphate: step 2/6. Catalyzes the dehydration of methylthioribulose-1-phosphate (MTRu-1-P) into 2,3-diketo-5-methylthiopentyl-1-phosphate (DK-MTP-1-P). The sequence is that of Probable methylthioribulose-1-phosphate dehydratase from Drosophila erecta (Fruit fly).